The following is a 573-amino-acid chain: Methionine--tRNA ligase (573 aa).

Positions 10-20 match the 'HIGH' region motif; the sequence is PYVNSVPHLGN. Zn(2+)-binding residues include cysteine 143, cysteine 146, cysteine 156, and cysteine 159. The short motif at 333-337 is the 'KMSKS' region element; sequence KFSKS. Lysine 336 contributes to the ATP binding site.

Belongs to the class-I aminoacyl-tRNA synthetase family. MetG type 1 subfamily. Zn(2+) serves as cofactor.

Its subcellular location is the cytoplasm. It carries out the reaction tRNA(Met) + L-methionine + ATP = L-methionyl-tRNA(Met) + AMP + diphosphate. Is required not only for elongation of protein synthesis but also for the initiation of all mRNA translation through initiator tRNA(fMet) aminoacylation. This is Methionine--tRNA ligase from Saccharolobus islandicus (strain M.14.25 / Kamchatka #1) (Sulfolobus islandicus).